Here is a 297-residue protein sequence, read N- to C-terminus: Golgi-associated RAB2 interactor protein 1A (297 aa).

The segment at 226 to 257 (SNRHQTSRDRHTDTATETDNSGNCKSTPLVAS) is disordered. Positions 240–257 (ATETDNSGNCKSTPLVAS) are enriched in polar residues.

It belongs to the GARIN family. In terms of assembly, interacts (via N-terminus) with RAB2B (in GTP-bound form). As to expression, expressed in testis (at protein level).

It localises to the golgi apparatus. Its function is as follows. RAB2B effector protein required for accurate acrosome formation and normal male fertility. This Mus musculus (Mouse) protein is Golgi-associated RAB2 interactor protein 1A.